Here is a 204-residue protein sequence, read N- to C-terminus: uncharacterized protein (204 aa).

The protein resides in the cytoplasm. The protein localises to the nucleus. This is an uncharacterized protein from Schizosaccharomyces pombe (strain 972 / ATCC 24843) (Fission yeast).